The primary structure comprises 642 residues: MGKIESNERVILNVGGTRHETYRSTLKTLPGTRLALLASSEPQGDCLTAAGDKLQPLPPPLSPPPRPPPLSPVPSGCFEGGAGNCSSHGGNGGNGGSDHPGGGREFFFDRHPGVFAYVLNYYRTGKLHCPADVCGPLFEEELAFWGIDETDVEPCCWMTYRQHRDAEEALDIFETPDLIGGDPGDDEDLAAKRLGIEDAAGLGGPDGKSGRWRKLQPRMWALFEDPYSSRAARFIAFASLFFILVSITTFCLETHEAFNIVKNKTEPVINGTSPVLQYEIETDPALTYVEGVCVVWFTFEFLVRIVFSPNKLEFIKNLLNIIDFVAILPFYLEVGLSGLSSKAAKDVLGFLRVVRFVRILRIFKLTRHFVGLRVLGHTLRASTNEFLLLIIFLALGVLIFATMIYYAERVGAQPNDPSASEHTQFKNIPIGFWWAVVTMTTLGYGDMYPQTWSGMLVGALCALAGVLTIAMPVPVIVNNFGMYYSLAMAKQKLPRKRKKHIPPAPLASSPTFCKTELNMACNSTQSDTCLGKENRLLEHNRSVLSGDDSTGSEPPLSPPERLPIRRSSTRDKNRRGETCFLLTTGDYTCASDGGIRKGYEKSRSLNNIAGLAGNALRLSPVTSPYNSPCPLRRSRSPIPSIL.

At 1–233 (MGKIESNERV…EDPYSSRAAR (233 aa)) the chain is on the cytoplasmic side. Residues 45–98 (DCLTAAGDKLQPLPPPLSPPPRPPPLSPVPSGCFEGGAGNCSSHGGNGGNGGSD) are disordered. Residues 56 to 72 (PLPPPLSPPPRPPPLSP) are compositionally biased toward pro residues. A compositionally biased stretch (gly residues) spans 78–98 (FEGGAGNCSSHGGNGGNGGSD). 4 residues coordinate Zn(2+): H128, C134, C155, and C156. Residues 234–254 (FIAFASLFFILVSITTFCLET) form a helical membrane-spanning segment. 2 N-linked (GlcNAc...) asparagine glycosylation sites follow: N263 and N270. A helical transmembrane segment spans residues 287–307 (TYVEGVCVVWFTFEFLVRIVF). At 308–317 (SPNKLEFIKN) the chain is on the cytoplasmic side. The chain crosses the membrane as a helical span at residues 318–338 (LLNIIDFVAILPFYLEVGLSG). The helical; Voltage-sensor transmembrane segment at 350 to 372 (FLRVVRFVRILRIFKLTRHFVGL) threads the bilayer. Residues 373–385 (RVLGHTLRASTNE) lie on the Cytoplasmic side of the membrane. Residues 386 to 406 (FLLLIIFLALGVLIFATMIYY) form a helical membrane-spanning segment. The K(+) site is built by T441, L442, G443, and Y444. Residues 441-446 (TLGYGD) carry the Selectivity filter motif. Residues 457-477 (VGALCALAGVLTIAMPVPVIV) traverse the membrane as a helical segment. Residues 478–642 (NNFGMYYSLA…RSRSPIPSIL (165 aa)) lie on the Cytoplasmic side of the membrane. The disordered stretch occupies residues 542–576 (SVLSGDDSTGSEPPLSPPERLPIRRSSTRDKNRRG). Phosphoserine is present on S604.

This sequence belongs to the potassium channel family. C (Shaw) (TC 1.A.1.2) subfamily. Kv3.2/KCNC2 sub-subfamily. Homotetramer and heterotetramer with other channel-forming alpha subunits, such as KCNC1. Interacts with KCNC1. Homotetramer or heterotetramer channel activity is regulated by association with modulating ancillary subunits such as KCNE1, KCNE2 and KCNE3, creating a functionally diverse range of channel complexes. Interacts with KCNE1, KCNE2 and KCNE3. Post-translationally, phosphorylated by PKA in cortical synaptosomes. cAMP-dependent phosphorylation inhibits channel activity. Histamine H2 receptor- and PKA-induced phosphorylation extends action potential spike duration, reduces action potential spike amplitude, sustains maximum firing frequency in hippocampal interneurons; also reduces the incidence of high-frequency oscillations in hippocampal CA3 pyramidal cell layers. In terms of tissue distribution, weakly expressed in the brain at postnatal age day 7 (P7) and increased at P60. Not detectable in newborn hippocampus. Expressed weakly at P7 in the early developing hippocampus, increasing progressively and reaching a plateau of expression at P14 that is maintained throughout P51. Expressed in paravalbumin- and somatostain-containing inhibitory interneurons of the hippocampus; in the CA1/CA3 stratum oriens-alveus and stratum pyramidale and in cells within the hilus and subgranular layer of the dentate gyrus (DG). Strongly expressed in parvalbumin (PV)-containing fast-spiking GABAergic inhibitor interneurons in deep cortical layers V and VI. Also expressed in non-fast-spiking calbindin (CB)- and/or somatostatin (SOM)-containing interneurons in deep cortical layers V and VI. Expressed in starburst amacrine cells of the retina in the inner nuclear layer (INL) and ganglion cell layer (GCL). Expressed in the suprachiasmatic nucleus (SCN) (at protein level). Expressed in the early developing brain, increasing progressively until P14.

The protein resides in the cell membrane. It is found in the membrane. Its subcellular location is the perikaryon. It localises to the cell projection. The protein localises to the axon. The protein resides in the dendrite. It is found in the postsynaptic cell membrane. Its subcellular location is the presynaptic cell membrane. It localises to the synapse. The protein localises to the synaptosome. The protein resides in the apical cell membrane. It is found in the basolateral cell membrane. The enzyme catalyses K(+)(in) = K(+)(out). Inhibited by millimolar levels of tetraethylammonium (TEA). Contrary to other channels, inhibited only by millimolar levels of 4-aminopyridine (4-AP). Inhibited by Stichodactyla helianthus peptide ShK. Its function is as follows. Voltage-gated potassium channel that mediates transmembrane potassium transport in excitable membranes, primarily in the brain. Contributes to the regulation of the fast action potential repolarization and in sustained high-frequency firing in neurons of the central nervous system. Homotetramer channels mediate delayed-rectifier voltage-dependent potassium currents that activate rapidly at high-threshold voltages and inactivate slowly. Forms tetrameric channels through which potassium ions pass in accordance with their electrochemical gradient. The channel alternates between opened and closed conformations in response to the voltage difference across the membrane. Can form functional homotetrameric and heterotetrameric channels that contain variable proportions of KCNC1, and possibly other family members as well; channel properties depend on the type of alpha subunits that are part of the channel. Channel properties may be modulated by either the association with ancillary subunits, such as KCNE1, KCNE2 and KCNE3 or indirectly by nitric oxide (NO) through a cGMP- and PKG-mediated signaling cascade, slowing channel activation and deactivation of delayed rectifier potassium channels. Contributes to fire sustained trains of very brief action potentials at high frequency in thalamocortical and suprachiasmatic nucleus (SCN) neurons, in hippocampal and neocortical interneurons and in retinal ganglion cells. Sustained maximal action potential firing frequency in inhibitory hippocampal interneurons is negatively modulated by histamine H2 receptor activation in a cAMP- and protein kinase (PKA) phosphorylation-dependent manner. Plays a role in maintaining the fidelity of synaptic transmission in neocortical GABAergic interneurons by generating action potential (AP) repolarization at nerve terminals, thus reducing spike-evoked calcium influx and GABA neurotransmitter release. Required for long-range synchronization of gamma oscillations over distance in the neocortex. Contributes to the modulation of the circadian rhythm of spontaneous action potential firing in suprachiasmatic nucleus (SCN) neurons in a light-dependent manner. This is Voltage-gated potassium channel KCNC2 from Mus musculus (Mouse).